A 343-amino-acid polypeptide reads, in one-letter code: D-alanine--D-alanine ligase (343 aa).

Residues 129–335 (KYVLEHFNIK…YSKLIDELIE (207 aa)) enclose the ATP-grasp domain. Residue 162 to 217 (ENKLGYAVFIKPSNSGSSVGITKAHNRKELEAGLEEAMKYDRKILVEEALNAREIE) participates in ATP binding. The Mg(2+) site is built by D288, E302, and N304.

The protein belongs to the D-alanine--D-alanine ligase family. Mg(2+) is required as a cofactor. Mn(2+) serves as cofactor.

Its subcellular location is the cytoplasm. It carries out the reaction 2 D-alanine + ATP = D-alanyl-D-alanine + ADP + phosphate + H(+). The protein operates within cell wall biogenesis; peptidoglycan biosynthesis. Cell wall formation. The chain is D-alanine--D-alanine ligase from Clostridium acetobutylicum (strain ATCC 824 / DSM 792 / JCM 1419 / IAM 19013 / LMG 5710 / NBRC 13948 / NRRL B-527 / VKM B-1787 / 2291 / W).